The primary structure comprises 184 residues: Putative tetraheme cytochrome-c type (184 aa).

Topologically, residues 1-14 are cytoplasmic; it reads MSKHAASSAKRFSL. Residues 15-35 form a helical membrane-spanning segment; that stretch reads LALGLMFVGGIVFVWAVDFGI. Over 36–184 the chain is Periplasmic; sequence KTTNTLEFCT…HEPTEPDDAS (149 aa). Residues Cys-44, Cys-47, Met-50, Cys-73, Cys-76, and His-77 each coordinate heme. The substrate site is built by Lys-89 and Asp-95. Residues Asp-95, Cys-133, Cys-136, His-137, Cys-165, Cys-168, His-169, and His-174 each contribute to the heme site.

This sequence belongs to the NapC/NirT/NrfH family. Post-translationally, binds 4 heme groups per subunit.

It localises to the cell inner membrane. The chain is Putative tetraheme cytochrome-c type from Allochromatium vinosum (strain ATCC 17899 / DSM 180 / NBRC 103801 / NCIMB 10441 / D) (Chromatium vinosum).